Reading from the N-terminus, the 37-residue chain is Photosystem I reaction center subunit VIII (37 aa).

A helical membrane pass occupies residues S9 to L29.

It belongs to the PsaI family.

It localises to the plastid. The protein resides in the chloroplast thylakoid membrane. Its function is as follows. May help in the organization of the PsaL subunit. The chain is Photosystem I reaction center subunit VIII from Pelargonium hortorum (Common geranium).